Consider the following 410-residue polypeptide: Chlorobenzene dioxygenase, ferredoxin reductase component (410 aa).

4 to 35 is a binding site for FAD; that stretch reads HVAIIGNGVAGFTTAQALRAEGFEGRISLIGN. Position 145-173 (145-173) interacts with NAD(+); that stretch reads RLVIAGGGLIGCEVATTARKLGLAVTILE.

This sequence belongs to the bacterial ring-hydroxylating dioxygenase ferredoxin reductase family. In terms of assembly, this dioxygenase system consists of four proteins: the two subunits of the oxygenase component (TecA1 and TecA2), a ferredoxin (TecA3) and a ferredoxin reductase (TecA4). FAD serves as cofactor.

The catalysed reaction is 2 reduced [2Fe-2S]-[ferredoxin] + NAD(+) + H(+) = 2 oxidized [2Fe-2S]-[ferredoxin] + NADH. Its pathway is aromatic compound metabolism. Part of the chlorobenzene dioxygenase system that catalyzes the dihydroxylation of a range of aromatic compounds, including chlorinated benzenes and toluenes, and dinuclear aromatics such as biphenyl and dibenzo-p-dioxin. The protein is Chlorobenzene dioxygenase, ferredoxin reductase component of Cupriavidus sp. (strain PS12).